The sequence spans 188 residues: Elongation factor P (188 aa).

The protein belongs to the elongation factor P family.

The protein localises to the cytoplasm. It participates in protein biosynthesis; polypeptide chain elongation. Functionally, involved in peptide bond synthesis. Stimulates efficient translation and peptide-bond synthesis on native or reconstituted 70S ribosomes in vitro. Probably functions indirectly by altering the affinity of the ribosome for aminoacyl-tRNA, thus increasing their reactivity as acceptors for peptidyl transferase. The protein is Elongation factor P of Exiguobacterium sp. (strain ATCC BAA-1283 / AT1b).